The sequence spans 95 residues: DNA-directed RNA polymerase subunit Rpo11 (95 aa).

This sequence belongs to the archaeal Rpo11/eukaryotic RPB11/RPC19 RNA polymerase subunit family. As to quaternary structure, part of the RNA polymerase complex.

It localises to the cytoplasm. The enzyme catalyses RNA(n) + a ribonucleoside 5'-triphosphate = RNA(n+1) + diphosphate. Its function is as follows. DNA-dependent RNA polymerase (RNAP) catalyzes the transcription of DNA into RNA using the four ribonucleoside triphosphates as substrates. This chain is DNA-directed RNA polymerase subunit Rpo11, found in Pyrococcus furiosus (strain ATCC 43587 / DSM 3638 / JCM 8422 / Vc1).